The following is a 315-amino-acid chain: DNA-directed RNA polymerase subunit alpha (315 aa).

The segment at 1–228 (MAQFQIECVE…DLFNPLKDIS (228 aa)) is alpha N-terminal domain (alpha-NTD). Residues 238–315 (IPDDPTAQIP…LPQERSSKHS (78 aa)) form an alpha C-terminal domain (alpha-CTD) region.

Belongs to the RNA polymerase alpha chain family. In cyanobacteria the RNAP catalytic core is composed of 2 alpha, 1 beta, 1 beta', 1 gamma and 1 omega subunit. When a sigma factor is associated with the core the holoenzyme is formed, which can initiate transcription.

The catalysed reaction is RNA(n) + a ribonucleoside 5'-triphosphate = RNA(n+1) + diphosphate. In terms of biological role, DNA-dependent RNA polymerase catalyzes the transcription of DNA into RNA using the four ribonucleoside triphosphates as substrates. The protein is DNA-directed RNA polymerase subunit alpha of Trichormus variabilis (strain ATCC 29413 / PCC 7937) (Anabaena variabilis).